The sequence spans 252 residues: 5-oxoprolinase subunit A (252 aa).

This sequence belongs to the LamB/PxpA family. As to quaternary structure, forms a complex composed of PxpA, PxpB and PxpC.

The enzyme catalyses 5-oxo-L-proline + ATP + 2 H2O = L-glutamate + ADP + phosphate + H(+). Its function is as follows. Catalyzes the cleavage of 5-oxoproline to form L-glutamate coupled to the hydrolysis of ATP to ADP and inorganic phosphate. The sequence is that of 5-oxoprolinase subunit A from Staphylococcus saprophyticus subsp. saprophyticus (strain ATCC 15305 / DSM 20229 / NCIMB 8711 / NCTC 7292 / S-41).